The chain runs to 1006 residues: 5'-3' exoribonuclease 2 (1006 aa).

Coiled-coil stretches lie at residues 256 to 287 (FAQD…NSEQ) and 453 to 544 (RLKK…AESE). The segment at 492-529 (DDAVSKANKTNFNLAEVMKQKIINKKHRLEKDNEEEEI) is required for retention in the nucleus. The span at 561–575 (DRENSETTEVSRDSP) shows a compositional bias: basic and acidic residues. Disordered regions lie at residues 561-584 (DREN…NVSE) and 939-1006 (HNYG…ANRR). Serine 574 is subject to Phosphoserine. The span at 939 to 956 (HNYGRNSYNSQPGFNNSR) shows a compositional bias: polar residues. A run of 6 repeats spans residues 955-958 (SRYD), 961-964 (NNNY), 972-974 (NNN), 975-978 (YSGN), 984-986 (YSG), and 996-999 (SRYD). Residues 955-999 (SRYDGGNNNYRQNSNYRNNNYSGNRNSGQYSGNSYSRNNKQSRYD) form a 2 X 4 AA repeats of S-R-Y-D, N-N-N-Y, Y-S-G-N region. Over residues 959-993 (GGNNNYRQNSNYRNNNYSGNRNSGQYSGNSYSRNN) the composition is skewed to low complexity. The segment covering 996–1006 (SRYDNSRANRR) has biased composition (basic and acidic residues).

It belongs to the 5'-3' exonuclease family. XRN2/RAT1 subfamily. In terms of assembly, interacts with RAI1 and RTT103. The cofactor is Mg(2+). Requires Mn(2+) as cofactor.

The protein localises to the nucleus. With respect to regulation, inhibited by nucleoside 3', 5'-bisphosphates. Possesses 5'-&gt;3' exoribonuclease activity. Required for the processing of nuclear mRNA, rRNA and small nucleolar RNA (snoRNA) precursors. May promote termination of transcription by RNA polymerase II via the recruitment of 3'-end processing factors to the poly(A) site and by the degradation of nascent RNA downstream of the poly(A) site. This Saccharomyces cerevisiae (strain ATCC 204508 / S288c) (Baker's yeast) protein is 5'-3' exoribonuclease 2 (RAT1).